We begin with the raw amino-acid sequence, 177 residues long: Large ribosomal subunit protein uL6 (177 aa).

This sequence belongs to the universal ribosomal protein uL6 family. Part of the 50S ribosomal subunit.

Its function is as follows. This protein binds to the 23S rRNA, and is important in its secondary structure. It is located near the subunit interface in the base of the L7/L12 stalk, and near the tRNA binding site of the peptidyltransferase center. This is Large ribosomal subunit protein uL6 from Enterobacter sp. (strain 638).